Here is a 447-residue protein sequence, read N- to C-terminus: Probable ethanolamine kinase B (447 aa).

The span at 178–208 (STTISTSTSTSTSTSSTSPSTSPSLENSTLS) shows a compositional bias: low complexity. The tract at residues 178 to 217 (STTISTSTSTSTSTSSTSPSTSPSLENSTLSPRNMNTQTS) is disordered.

This sequence belongs to the choline/ethanolamine kinase family.

The protein resides in the cytoplasm. The catalysed reaction is ethanolamine + ATP = phosphoethanolamine + ADP + H(+). The protein operates within phospholipid metabolism; phosphatidylethanolamine biosynthesis; phosphatidylethanolamine from ethanolamine: step 1/3. Its function is as follows. Highly specific for ethanolamine phosphorylation. May be a rate-controlling step in phosphatidylethanolamine biosynthesis. In Dictyostelium discoideum (Social amoeba), this protein is Probable ethanolamine kinase B (etnkB).